A 1399-amino-acid chain; its full sequence is MNQEVMNLFNPQAPAQTFDSIRISLASPEKILSWSYGEIKKPETINYRTFKPERDGLFCARIFGPIKDYECLCGKYKRMKYKGVICEKCGVEVTLSRVRRERMGHIELAAPVAHIWFLKSLPSRIGTLLDMTLKDIERVLYFENYIVTEPGLTALKQNQLLSEEEYMMAVDEYGEDSFTAMIGAEAIHHLLASMELEKIAGDLRSELASTTSDLKQKKLLKRLKVVENFLESGNKPEWMVMKIIPVIPPDLRPLVPLDGGRFATSDLNDLYRRVINRNNRLKRLIELKAPGIIIRNEKRMLQEAVDALFDNGRRGRVITGANKRPLKSLSDMLKGKQGRFRQNLLGKRVDYSGRSVIVTGPELKLHQCGLPKKMALELFKPFIYARLDAKGYSSTVKQAKKLVEKEKPEVWDILDEVIREHPVLLNRAPTLHRLGIQAFEPILIEGKAIQLHPLVCTAFNADFDGDQMAVHVPLSLEAQLEARVLMMSTNNILHPASGAPIIVPSQDMVLGLYYLSIMNQNEPGEGMVFADMGELQHALETKVVTLHSKIKGRYKTVDENGNPVSMIYETTPGRMIIGELLPKNHNVPFDICNQELTKKNISKMIDTVYRHCGQKETVIFCDRIMALGFSHACKAGISFGKDDMVIPETKAKLIAETEALAKEYEQQYNDGLITQGEKYNKVVDAWAKCSERVADEMMKRIKAIEFDDSGRQKQMNSIYMMSHSGARGSPAQMRQLAGMRGLMARPDGSIIETPIISNFKEGLTVMEYFNSTHGARKGLADTALKTANSGYLTRRLVDVAQDCIVVTPDCGTDKGLTMQPIVDAGQVVASIGQRVLGRTALDDVVNPATGEVIVQAGRLIDERDVEAIEAAGIQTVRIRSALTCEVRTGVCAVCYGRDLARGTPVNIGEAVGVIAAQSIGEPGTQLTMRTFHMGGTAQVVDQSFLEASFEGTVKIRNRNVVRNSDGHLVVMGRNMAVLILDEAGAERASHKVTYGSRIFVDDGDKVKRGQRIAEWDPYTRPMLTEVEGTVAFEDLVDGISVQETTDESTGITKREVIDWRSTPRGSDLKPAITILDSKGKVAKLARGGDARFLLSVETVLSVDSGAKVRPGDVVARIPTESARTKDITGGLPRVAELFEARRPKDHAIIAEIDGTVRFGRDYKNKRRIIIEPHDSTLEPVEYLIPKGKPFHLQDGDVIEKGDFILDGNPAPHDILAIKGVEALASYLVNEIQEVYRLQGVLINDKHIEVIVRQMLQKVEITAQGDSTYIPGDHVDQVEFDEVNDRLVEEGKKPAEGQPVLLGITKASLQTPSFISAASFQETTRVLTEAAVAGKIDTLQGLKENVIVGRLIPAGTGGAMAQIRRIARSRDDLILDERRKESGVEMANPAIADMAGQPAE.

Residues Cys-71, Cys-73, Cys-86, and Cys-89 each coordinate Zn(2+). Mg(2+)-binding residues include Asp-462, Asp-464, and Asp-466. Zn(2+) is bound by residues Cys-810, Cys-884, Cys-891, and Cys-894.

Belongs to the RNA polymerase beta' chain family. The RNAP catalytic core consists of 2 alpha, 1 beta, 1 beta' and 1 omega subunit. When a sigma factor is associated with the core the holoenzyme is formed, which can initiate transcription. The cofactor is Mg(2+). Zn(2+) is required as a cofactor.

It catalyses the reaction RNA(n) + a ribonucleoside 5'-triphosphate = RNA(n+1) + diphosphate. Its function is as follows. DNA-dependent RNA polymerase catalyzes the transcription of DNA into RNA using the four ribonucleoside triphosphates as substrates. The sequence is that of DNA-directed RNA polymerase subunit beta' from Chelativorans sp. (strain BNC1).